The sequence spans 350 residues: Meiotic driver wtf30 (350 aa).

The disordered stretch occupies residues 1–92 (MKNKYYPLRS…RENHSSGTTD (92 aa)). Over residues 11-29 (SIDELSTKNDNEIDLEKGP) the composition is skewed to basic and acidic residues. The span at 57 to 72 (GANNPNLFNTDESTTP) shows a compositional bias: polar residues. Transmembrane regions (helical) follow at residues 97 to 117 (FLIK…PAVC), 134 to 154 (WVYF…LWCF), 165 to 185 (CVKV…IGLF), 190 to 210 (EMMI…FVYI), 226 to 246 (CTIS…FWTF), 253 to 273 (LAKV…TMFL), and 280 to 300 (WTGC…LFLC).

Belongs to the WTF family. In terms of assembly, homomer. Forms protein aggregates. The two isoforms can interact with each other and with themselves. High sequence similarity is required for their interaction.

It localises to the spore membrane. It is found in the vacuole membrane. Its subcellular location is the ascus epiplasm. The protein localises to the cytoplasm. The protein resides in the endoplasmic reticulum membrane. Its function is as follows. Promotes unequal transmission of alleles from the parental zygote to progeny spores by acting as poison/antidote system where the poison and antidote proteins are produced from the same locus; the poison component is trans-acting and targets all spores within an ascus whereas the antidote component is spore-specific, leading to poisoning of all progeny that do not inherit the allele. Localizes isoform 2 to the vacuole thereby facilitating its degradation. Functionally, forms toxic aggregates that disrupt spore maturation. This Schizosaccharomyces kambucha (Fission yeast) protein is Meiotic driver wtf30.